Here is a 232-residue protein sequence, read N- to C-terminus: Probable dihydroorotate dehydrogenase B (NAD(+)), electron transfer subunit (232 aa).

One can recognise an FAD-binding FR-type domain in the interval 1–86; it reads MYYTRITQIE…RGAFGSAFTP (86 aa). 4 residues coordinate [2Fe-2S] cluster: Cys202, Cys207, Cys210, and Cys219.

Belongs to the PyrK family. Heterotetramer of 2 PyrK and 2 PyrD type B subunits. It depends on [2Fe-2S] cluster as a cofactor. Requires FAD as cofactor.

Its pathway is pyrimidine metabolism; UMP biosynthesis via de novo pathway; orotate from (S)-dihydroorotate (NAD(+) route): step 1/1. Responsible for channeling the electrons from the oxidation of dihydroorotate from the FMN redox center in the PyrD type B subunit to the ultimate electron acceptor NAD(+). The polypeptide is Probable dihydroorotate dehydrogenase B (NAD(+)), electron transfer subunit (Archaeoglobus fulgidus (strain ATCC 49558 / DSM 4304 / JCM 9628 / NBRC 100126 / VC-16)).